Here is a 599-residue protein sequence, read N- to C-terminus: Translation initiation factor IF-2 (599 aa).

Residues 111-278 form the tr-type G domain; sequence PRPPIITVMG…SILLLAEILE (168 aa). A G1 region spans residues 120–127; sequence GHVDHGKT. GTP is bound at residue 120–127; the sequence is GHVDHGKT. Residues 145 to 149 are G2; the sequence is GITQH. The G3 stretch occupies residues 166-169; sequence DTPG. GTP contacts are provided by residues 166-170 and 220-223; these read DTPGH and NKMD. Residues 220–223 are G4; it reads NKMD. Residues 256–258 are G5; it reads SAL.

It belongs to the TRAFAC class translation factor GTPase superfamily. Classic translation factor GTPase family. IF-2 subfamily.

The protein localises to the cytoplasm. Functionally, one of the essential components for the initiation of protein synthesis. Protects formylmethionyl-tRNA from spontaneous hydrolysis and promotes its binding to the 30S ribosomal subunits. Also involved in the hydrolysis of GTP during the formation of the 70S ribosomal complex. The sequence is that of Translation initiation factor IF-2 from Mesomycoplasma hyopneumoniae (strain 232) (Mycoplasma hyopneumoniae).